The chain runs to 290 residues: Poly-beta-1,6-N-acetyl-D-glucosamine N-deacetylase (290 aa).

The N-terminal stretch at 1–28 is a signal peptide; the sequence is MKYRKLIILVLSILIILPVSTLDGHHIA. The region spanning 114 to 290 is the NodB homology domain; that stretch reads RSVWINFDDM…KRWDGFHEKD (177 aa).

The protein belongs to the polysaccharide deacetylase family.

It localises to the secreted. Its subcellular location is the cell wall. Its function is as follows. Catalyzes the N-deacetylation of poly-beta-1,6-N-acetyl-D-glucosamine (PNAG, also referred to as PIA), a biofilm adhesin polysaccharide. N-deacetylation is crucial for attachment of the polysaccharide to the bacterial cell surface; it leads to the introduction of positive charges in the otherwise neutral PIA polymer, allowing electrostatic interactions. The chain is Poly-beta-1,6-N-acetyl-D-glucosamine N-deacetylase (icaB) from Staphylococcus aureus (strain MRSA252).